We begin with the raw amino-acid sequence, 400 residues long: Glutamyl-tRNA reductase (400 aa).

Residues 45 to 48, S103, 108 to 110, and Q114 contribute to the substrate site; these read TCNR and EDQ. C46 acts as the Nucleophile in catalysis. Position 179–184 (179–184) interacts with NADP(+); the sequence is GYGEIG.

The protein belongs to the glutamyl-tRNA reductase family. Homodimer.

It catalyses the reaction (S)-4-amino-5-oxopentanoate + tRNA(Glu) + NADP(+) = L-glutamyl-tRNA(Glu) + NADPH + H(+). It functions in the pathway porphyrin-containing compound metabolism; protoporphyrin-IX biosynthesis; 5-aminolevulinate from L-glutamyl-tRNA(Glu): step 1/2. In terms of biological role, catalyzes the NADPH-dependent reduction of glutamyl-tRNA(Glu) to glutamate 1-semialdehyde (GSA). This chain is Glutamyl-tRNA reductase, found in Clostridium perfringens (strain 13 / Type A).